A 79-amino-acid polypeptide reads, in one-letter code: Putative membrane protein insertion efficiency factor (79 aa).

This sequence belongs to the UPF0161 family.

The protein resides in the cell inner membrane. Functionally, could be involved in insertion of integral membrane proteins into the membrane. The chain is Putative membrane protein insertion efficiency factor from Thermotoga neapolitana (strain ATCC 49049 / DSM 4359 / NBRC 107923 / NS-E).